Here is a 403-residue protein sequence, read N- to C-terminus: O-succinylhomoserine sulfhydrylase (403 aa).

Lysine 219 carries the post-translational modification N6-(pyridoxal phosphate)lysine.

It belongs to the trans-sulfuration enzymes family. MetZ subfamily. As to quaternary structure, homotetramer. Requires pyridoxal 5'-phosphate as cofactor.

It carries out the reaction O-succinyl-L-homoserine + hydrogen sulfide = L-homocysteine + succinate. It participates in amino-acid biosynthesis; L-methionine biosynthesis via de novo pathway; L-homocysteine from O-succinyl-L-homoserine: step 1/1. Functionally, catalyzes the formation of L-homocysteine from O-succinyl-L-homoserine (OSHS) and hydrogen sulfide. Cannot use the other activated form of L-homoserine, O-acetyl-L-homoserine, as a substrate. The protein is O-succinylhomoserine sulfhydrylase of Pseudomonas aeruginosa (strain ATCC 15692 / DSM 22644 / CIP 104116 / JCM 14847 / LMG 12228 / 1C / PRS 101 / PAO1).